We begin with the raw amino-acid sequence, 662 residues long: MASAGKPTLDDSRRATGSPKMKARENAKDTLCRNVTIYGRCRYEDKGCAFNHDPHKVNTTYQSDSRRRLNVDSPSFTPSLLSSNGSSPTTASVTAKKAATISPKAANAAPFQPRNITSRSNTSTPSGRAETMTPDWSVAEVQEFVPQGFDTAHMASLQGNSNGGVPSTSPFDPFVTASNPLSAASAVGPVQANPFAHDTAAAAAALGGAFFAGQSGFQQPVQYHLYAPIGPHSQNTLGYQRNVHDLFLPNDFREELQKKAAATLQTLPNTQLPAQVDYFHSLVPLDLNHQKNATIFGFPSWVYKAQSSKDGNFYALRRLEGFRLTNEKAIRSVQAWKRVCNGSVVTVHDAFTSRSFQDSSLIFVTDYHPLSKTLAEQHLGAGNRFQGRHNTHIPEQVLWGYMTQIANGLKAIHSNGLAARILDPSKVLVTGKNRIRLNACAIMDVVQYDTQRSIAELQRQDLVNFGQLIVTLGANTPSVMHNPTKAMEHFTRAYSPQLKNSVFWLLNGLQKDQDRNIDIFITGISSQLMSTFDSALHLDDELTSDLSRELENGRLVRLVTKLNFVNERPEYEHDRQWSENGERYFLKMFRDYVFHQVDAQGDPVVDLGHVLSCLNKLDAGTDEKITLVSRDEQSCFVVSYKDIKKALESSFQALLKPTRRLH.

Disordered regions lie at residues 1 to 26 (MASAGKPTLDDSRRATGSPKMKAREN) and 59 to 131 (TTYQ…RAET). Residues 26 to 55 (NAKDTLCRNVTIYGRCRYEDKGCAFNHDPH) form a C3H1-type zinc finger. Polar residues predominate over residues 72–85 (DSPSFTPSLLSSNG). Low complexity predominate over residues 86-102 (SSPTTASVTAKKAATIS). The segment covering 114-126 (RNITSRSNTSTPS) has biased composition (polar residues). The interval 265 to 525 (QTLPNTQLPA…NIDIFITGIS (261 aa)) is pseudokinase domain. ATP-binding positions include arginine 317, 366–373 (DYHPLSKT), and 425–426 (SK). A coiled-coil region spans residues 526–564 (SQLMSTFDSALHLDDELTSDLSRELENGRLVRLVTKLNF). The interval 565 to 662 (VNERPEYEHD…ALLKPTRRLH (98 aa)) is knob domain.

It belongs to the protein kinase superfamily. PAN3 family. Homodimer. Forms a heterotrimer with a catalytic subunit pan2 to form the poly(A)-nuclease (PAN) deadenylation complex. Interacts (via PAM-2 motif) with poly(A)-binding protein pab1 (via PABC domain), conferring substrate specificity of the enzyme complex.

It localises to the cytoplasm. Functionally, regulatory subunit of the poly(A)-nuclease (PAN) deadenylation complex, one of two cytoplasmic mRNA deadenylases involved in mRNA turnover. PAN specifically shortens poly(A) tails of RNA and the activity is stimulated by poly(A)-binding protein pab1. PAN deadenylation is followed by rapid degradation of the shortened mRNA tails by the CCR4-NOT complex. Deadenylated mRNAs are then degraded by two alternative mechanisms, namely exosome-mediated 3'-5' exonucleolytic degradation, or deadenylation-dependent mRNA decaping and subsequent 5'-3' exonucleolytic degradation by xrn1. May also be involved in post-transcriptional maturation of mRNA poly(A) tails. pan3 acts as a positive regulator for PAN activity, recruiting the catalytic subunit pan2 to mRNA via its interaction with RNA and with pab1. This Aspergillus oryzae (strain ATCC 42149 / RIB 40) (Yellow koji mold) protein is PAN2-PAN3 deadenylation complex subunit PAN3.